The sequence spans 684 residues: Chaperone protein HtpG (684 aa).

Positions Met1–Arg329 are a; substrate-binding. The segment at Ser330–Gln548 is b. The tract at residues Leu549–Leu684 is c.

It belongs to the heat shock protein 90 family. Homodimer.

It localises to the cytoplasm. In terms of biological role, molecular chaperone. Has ATPase activity. This chain is Chaperone protein HtpG, found in Porphyromonas gingivalis (strain ATCC BAA-308 / W83).